The following is a 192-amino-acid chain: 3-hydroxyanthranilate 3,4-dioxygenase (192 aa).

Arginine 50 lines the O2 pocket. 3 residues coordinate Fe cation: histidine 54, glutamate 60, and histidine 102. Position 60 (glutamate 60) interacts with substrate. Substrate-binding residues include arginine 106 and glutamate 116. Positions 131, 134, 168, and 171 each coordinate a divalent metal cation.

It belongs to the 3-HAO family. The cofactor is Fe(2+).

Its subcellular location is the cytoplasm. It catalyses the reaction 3-hydroxyanthranilate + O2 = (2Z,4Z)-2-amino-3-carboxymuconate 6-semialdehyde. The protein operates within cofactor biosynthesis; NAD(+) biosynthesis; quinolinate from L-kynurenine: step 3/3. Catalyzes the oxidative ring opening of 3-hydroxyanthranilate to 2-amino-3-carboxymuconate semialdehyde, which spontaneously cyclizes to quinolinate. The protein is 3-hydroxyanthranilate 3,4-dioxygenase of Coccidioides immitis (strain RS) (Valley fever fungus).